Here is a 248-residue protein sequence, read N- to C-terminus: Pulmonary surfactant-associated protein A (248 aa).

The first 20 residues, 1–20 (MLLCSLTLTLLWMVASGLEC), serve as a signal peptide directing secretion. Residues 28–100 (GSPGIPGTPG…PGERGPPGFP (73 aa)) enclose the Collagen-like domain. The disordered stretch occupies residues 29 to 102 (SPGIPGTPGS…ERGPPGFPAY (74 aa)). A 4-hydroxyproline mark is found at Pro-30, Pro-33, Pro-36, Pro-42, Pro-54, Pro-57, Pro-63, Pro-67, and Pro-70. Basic and acidic residues predominate over residues 42–51 (PGRDGRDGIK). Residues 54–65 (PGPPGPMGPPGG) are compositionally biased toward pro residues. Over residues 69 to 82 (LPGRDGMTGAPGLP) the composition is skewed to low complexity. Basic and acidic residues predominate over residues 84–93 (ERGEKGEPGE). The 117-residue stretch at 132–248 (LAVGEKVFST…LQYRLAICEF (117 aa)) folds into the C-type lectin domain. Intrachain disulfides connect Cys-155/Cys-246 and Cys-224/Cys-238. The N-linked (GlcNAc...) asparagine glycan is linked to Asn-207. 4 residues coordinate Ca(2+): Glu-215, Arg-217, Asn-234, and Asp-235.

Belongs to the SFTPA family. In terms of assembly, oligomeric complex of 6 set of homotrimers.

It localises to the secreted. Its subcellular location is the extracellular space. The protein localises to the extracellular matrix. It is found in the surface film. In terms of biological role, in presence of calcium ions, it binds to surfactant phospholipids and contributes to lower the surface tension at the air-liquid interface in the alveoli of the mammalian lung and is essential for normal respiration. Enhances the expression of MYO18A/SP-R210 on alveolar macrophages. This chain is Pulmonary surfactant-associated protein A (SFTPA1), found in Bos taurus (Bovine).